The chain runs to 264 residues: Meiotic recombination protein REC102 (264 aa).

This sequence belongs to the TOP6B-like family. As to quaternary structure, interacts with REC104; seems to form a functional unit with REC104. REC102-REC104 interacts with SKI8-SPO11 and this interaction is required for proper subcellular location of the proteins during the initiation of recombination. Interacts with MEI4, REC114 and SPO11.

The protein localises to the nucleus. Its function is as follows. Required for formation of the SPO11-mediated double-strand breaks (DSBs) that initiate meiotic recombination. May mediate the interaction between SPO11 subunits during meiosis. Also needed for homolog chromosome pairing, synaptonemal complex formation, and for the proper timing of the first meiotic division. Not required for mitosis and mitotic DNA repair mechanisms. The polypeptide is Meiotic recombination protein REC102 (Saccharomyces cerevisiae (strain ATCC 204508 / S288c) (Baker's yeast)).